The chain runs to 432 residues: Endosome-associated-trafficking regulator 1 (432 aa).

At Ser-18 the chain carries Phosphoserine. The segment covering 126–143 (DTTTSRIYPKEASRHPLG) has biased composition (basic and acidic residues). Residues 126-145 (DTTTSRIYPKEASRHPLGLE) form a disordered region. Phosphoserine is present on Ser-148. The required for interaction with PTPN13 stretch occupies residues 174–196 (LEEDEDDGWNITYLPSAVDQTHS). The interval 226–250 (PPWTLSDTDSRISPASPAGSPNADF) is disordered. Ser-241 and Ser-245 each carry phosphoserine. Coiled-coil stretches lie at residues 262–289 (LRTLQISYEALKDENSKLRRKLNEVQSF) and 315–370 (FHDL…LRSG).

It belongs to the ENTR1 family. Found in a complex with ENTR1, PTPN13 and GIT1. Interacts with PTPN13 (via the FERM domain). Interacts (via N-terminus) with GIT1 (via N- and C-terminus); this interaction is direct. Interacts with NOD2. Interacts (via N-terminus) with IFT88. Interacts with VPS35. In terms of processing, phosphorylated.

The protein resides in the cytoplasm. It localises to the early endosome. It is found in the endosome. The protein localises to the recycling endosome. Its subcellular location is the midbody. The protein resides in the cytoskeleton. It localises to the microtubule organizing center. It is found in the centrosome. The protein localises to the cilium basal body. May be involved in modulation of TNF response. May be involved in presentation of TNFRSF1A on the cell surface. Involved in the endosome-to-plasma membrane trafficking and recycling of SNX27-retromer-dependent cargo proteins, such as GLUT1. Involved in the regulation of cytokinesis; the function may involve PTPN13 and GIT1. Its function is as follows. Endosome-associated protein that plays a role in membrane receptor sorting, cytokinesis and ciliogenesis. Involved in the endosome-to-plasma membrane trafficking and recycling of SNX27-retromer-dependent cargo proteins, such as GLUT1. Involved in the regulation of cytokinesis; the function may involve PTPN13 and GIT1. Plays a role in the formation of cilia. Involved in cargo protein localization, such as PKD2, at primary cilia. Involved in the presentation of the tumor necrosis factor (TNF) receptor TNFRSF1A on the cell surface, and hence in the modulation of the TNF-induced apoptosis. In Mus musculus (Mouse), this protein is Endosome-associated-trafficking regulator 1.